Here is a 259-residue protein sequence, read N- to C-terminus: Ribosome maturation factor RimP (259 aa).

A compositionally biased stretch (basic and acidic residues) spans 186 to 195; the sequence is RGKQAERELK. Positions 186–259 are disordered; that stretch reads RGKQAERELK…RGDTDLSEGD (74 aa). Over residues 239 to 248 the composition is skewed to basic residues; it reads KQHRLAAGRS.

It belongs to the RimP family.

Its subcellular location is the cytoplasm. Its function is as follows. Required for maturation of 30S ribosomal subunits. This Rhodopseudomonas palustris (strain HaA2) protein is Ribosome maturation factor RimP.